Here is a 307-residue protein sequence, read N- to C-terminus: MDEWINYDQFDRQTWHSFFPSEITFLTQENLDEIKSLNDQISLRDVQDIYLPLIKLIQLQYQNYQQMQLQKMTFLRKSSRRIPYIIGIAGSVAVGKSTTARLLQILLKRLMPDRRIEMITTDGFLYPNAELKRRGIMARKGFPESYDMDRLLTFMNDVNAGEDQVTAPTYSHSVYDVMEDHPQTIYKPDILIVEGINVLQLPTTQRLFVSDFFDFSVYVDADASLVEKWYLERFGMLLDTAFQDPTNYYYPYAQGDRAEAFKMAKQVWKDVDLPNLNDYILPTRTRADVILHKTEHHYIDRVYLRED.

Position 90–97 (90–97 (GSVAVGKS)) interacts with ATP.

The protein belongs to the prokaryotic pantothenate kinase family.

It is found in the cytoplasm. It catalyses the reaction (R)-pantothenate + ATP = (R)-4'-phosphopantothenate + ADP + H(+). It functions in the pathway cofactor biosynthesis; coenzyme A biosynthesis; CoA from (R)-pantothenate: step 1/5. The protein is Pantothenate kinase of Limosilactobacillus fermentum (strain NBRC 3956 / LMG 18251) (Lactobacillus fermentum).